A 241-amino-acid chain; its full sequence is Chlorophyll a-b binding protein 6, chloroplastic (241 aa).

The transit peptide at 1–35 directs the protein to the chloroplast; the sequence is MASNSLMSCGIAAVYPSLLSSSKSKFVSAGVPLPN. Residue Trp48 participates in chlorophyll b binding. Positions 68, 87, and 90 each coordinate chlorophyll a. Arg92 is a binding site for chlorophyll b. A helical membrane pass occupies residues 93–113; it reads WAMLAVPGILVPEALGYGNWV. Chlorophyll a is bound at residue Leu129. The helical transmembrane segment at 132 to 152 threads the bilayer; it reads PVPWGTLPTILAIEFLAIAFV. Positions 133, 153, and 156 each coordinate chlorophyll b. The chlorophyll a site is built by Lys190, Glu191, Asn194, Arg196, Gln208, and His224. Residues 197-217 form a helical membrane-spanning segment; it reads LALLAFVGFCVQQSAYPGTGP.

It belongs to the light-harvesting chlorophyll a/b-binding (LHC) protein family. The LHC complex consists of chlorophyll a-b binding proteins. Red-emitting heterodimer with LHCA4. Interacts with LHCA5. Binds at least 14 chlorophylls (8 Chl-a and 6 Chl-b) and carotenoids such as lutein and neoxanthin. is required as a cofactor. In terms of processing, photoregulated by reversible phosphorylation of its threonine residues.

The protein localises to the plastid. Its subcellular location is the chloroplast thylakoid membrane. The light-harvesting complex (LHC) functions as a light receptor, it captures and delivers excitation energy to photosystems with which it is closely associated. This Arabidopsis thaliana (Mouse-ear cress) protein is Chlorophyll a-b binding protein 6, chloroplastic.